Consider the following 672-residue polypeptide: Spermatid perinuclear RNA-binding protein (672 aa).

One can recognise a DZF domain in the interval 5–363 (RSFANDDRHV…ALKRPFEDGL (359 aa)). Positions 349–371 (GAGSSALKRPFEDGLGDDKDPNK) are disordered. Residues 357-371 (RPFEDGLGDDKDPNK) show a composition bias toward basic and acidic residues. The DRBM 1 domain occupies 387–453 (DLMNALMRLN…AVKVLQAMGY (67 aa)). Basic and acidic residues predominate over residues 467–476 (DEKSDNESKN). The interval 467–514 (DEKSDNESKNDTVSSNSSNNTGNSTTETSSTLEVRTQGPILTASGKNP) is disordered. A compositionally biased stretch (low complexity) spans 477–497 (DTVSSNSSNNTGNSTTETSST). In terms of domain architecture, DRBM 2 spans 510–576 (SGKNPVMELN…ALAALEKLFS (67 aa)). Asymmetric dimethylarginine occurs at positions 612 and 617.

In terms of assembly, interacts with EIF2AK2. Associates with microtubules; it is unsure whether such interaction is direct or indirect. As to expression, isoform 2 is expressed in spermatocytes (at protein level). Expressed in testis, thymus, ovary, liver, kidney, heart, spleen and brain. Expressed in cortex, dentate gyrus and Purkinje cell layer and granule cells of the cerebellum.

Its subcellular location is the cytoplasm. The protein localises to the cytoskeleton. Functionally, involved in spermatogenesis and sperm function. Plays a role in regulation of cell growth. Binds to double-stranded DNA and RNA. Binds most efficiently to poly(I:C) RNA than to poly(dI:dC) DNA. Also binds to single-stranded poly(G) RNA. Binds non-specifically to the mRNA PRM1 3'-UTR and adenovirus VA RNA. In Mus musculus (Mouse), this protein is Spermatid perinuclear RNA-binding protein (Strbp).